Here is a 50-residue protein sequence, read N- to C-terminus: Defensin-like protein 1 (50 aa).

4 cysteine pairs are disulfide-bonded: Cys2–Cys50, Cys14–Cys35, Cys20–Cys44, and Cys24–Cys46.

It belongs to the DEFL family.

The protein resides in the secreted. In terms of biological role, possesses antimicrobial activity sensitive to inorganic cations. Binds specifically to the fungal plasma membrane. Has no inhibitory effect on insect gut alpha-amylase. The polypeptide is Defensin-like protein 1 (Aesculus hippocastanum (Horse chestnut)).